Consider the following 405-residue polypeptide: SPbeta prophage-derived uncharacterized protein YomR (405 aa).

Residues 9 to 36 (QLKQNNIQINSLRGSNDRAEKHMLEHEQ) are a coiled coil.

In Bacillus subtilis (strain 168), this protein is SPbeta prophage-derived uncharacterized protein YomR (yomR).